The sequence spans 368 residues: Phosphate acyltransferase (368 aa).

The interval 337–368 (LGEGEHNAGGAGHASPAAGHHAEPSAAQSSKA) is disordered. A compositionally biased stretch (low complexity) spans 349–368 (HASPAAGHHAEPSAAQSSKA).

Belongs to the PlsX family. Homodimer. Probably interacts with PlsY.

The protein resides in the cytoplasm. It catalyses the reaction a fatty acyl-[ACP] + phosphate = an acyl phosphate + holo-[ACP]. Its pathway is lipid metabolism; phospholipid metabolism. In terms of biological role, catalyzes the reversible formation of acyl-phosphate (acyl-PO(4)) from acyl-[acyl-carrier-protein] (acyl-ACP). This enzyme utilizes acyl-ACP as fatty acyl donor, but not acyl-CoA. The sequence is that of Phosphate acyltransferase from Burkholderia lata (strain ATCC 17760 / DSM 23089 / LMG 22485 / NCIMB 9086 / R18194 / 383).